A 166-amino-acid chain; its full sequence is Crossover junction endodeoxyribonuclease RuvC (166 aa).

Active-site residues include aspartate 12, glutamate 71, and aspartate 143. The Mg(2+) site is built by aspartate 12, glutamate 71, and aspartate 143.

Belongs to the RuvC family. As to quaternary structure, homodimer which binds Holliday junction (HJ) DNA. The HJ becomes 2-fold symmetrical on binding to RuvC with unstacked arms; it has a different conformation from HJ DNA in complex with RuvA. In the full resolvosome a probable DNA-RuvA(4)-RuvB(12)-RuvC(2) complex forms which resolves the HJ. Mg(2+) is required as a cofactor.

The protein resides in the cytoplasm. It carries out the reaction Endonucleolytic cleavage at a junction such as a reciprocal single-stranded crossover between two homologous DNA duplexes (Holliday junction).. Functionally, the RuvA-RuvB-RuvC complex processes Holliday junction (HJ) DNA during genetic recombination and DNA repair. Endonuclease that resolves HJ intermediates. Cleaves cruciform DNA by making single-stranded nicks across the HJ at symmetrical positions within the homologous arms, yielding a 5'-phosphate and a 3'-hydroxyl group; requires a central core of homology in the junction. The consensus cleavage sequence is 5'-(A/T)TT(C/G)-3'. Cleavage occurs on the 3'-side of the TT dinucleotide at the point of strand exchange. HJ branch migration catalyzed by RuvA-RuvB allows RuvC to scan DNA until it finds its consensus sequence, where it cleaves and resolves the cruciform DNA. The sequence is that of Crossover junction endodeoxyribonuclease RuvC from Oleidesulfovibrio alaskensis (strain ATCC BAA-1058 / DSM 17464 / G20) (Desulfovibrio alaskensis).